Here is a 367-residue protein sequence, read N- to C-terminus: Cyclin-D5-1 (367 aa).

The interval 307 to 333 (QPTSPASKSTTTTTGKRSSSSSCSEST) is disordered.

It belongs to the cyclin family. Cyclin D subfamily.

This chain is Cyclin-D5-1 (CYCD5-1), found in Oryza sativa subsp. japonica (Rice).